The sequence spans 153 residues: Large ribosomal subunit protein uL22 (153 aa).

Belongs to the universal ribosomal protein uL22 family. As to quaternary structure, part of the 50S ribosomal subunit.

In terms of biological role, this protein binds specifically to 23S rRNA. It makes multiple contacts with different domains of the 23S rRNA in the assembled 50S subunit and ribosome. Its function is as follows. The globular domain of the protein is located near the polypeptide exit tunnel on the outside of the subunit, while an extended beta-hairpin is found that lines the wall of the exit tunnel in the center of the 70S ribosome. In Methanococcus aeolicus (strain ATCC BAA-1280 / DSM 17508 / OCM 812 / Nankai-3), this protein is Large ribosomal subunit protein uL22.